The primary structure comprises 211 residues: Ras-related protein Rab-38 (211 aa).

GTP-binding residues include glycine 19, valine 20, glycine 21, lysine 22, threonine 23, serine 24, serine 35, serine 36, tyrosine 38, and threonine 41. A Mg(2+)-binding site is contributed by threonine 23. A Switch 1 motif is present at residues 32–46 (QNFSSHYRATIGVDF). Mg(2+)-binding residues include threonine 41 and aspartate 65. GTP is bound by residues glycine 68, lysine 128, aspartate 130, alanine 160, and lysine 161. Positions 68 to 81 (GQERFGNMTRVYYR) match the Switch 2 motif. A lipid anchor (S-palmitoyl cysteine) is attached at cysteine 205. A lipid anchor (S-geranylgeranyl cysteine) is attached at cysteine 208.

It belongs to the small GTPase superfamily. Rab family. In terms of assembly, interacts with ANKRD27. Mg(2+) serves as cofactor.

It localises to the cell membrane. Its subcellular location is the cytoplasmic vesicle. The protein localises to the phagosome. It is found in the phagosome membrane. The protein resides in the melanosome. It localises to the melanosome membrane. It carries out the reaction GTP + H2O = GDP + phosphate + H(+). Regulated by guanine nucleotide exchange factors (GEFs) including the BLOC-3 complex composed of HPS1 and HPS4 which promote the exchange of bound GDP for free GTP. Regulated by GTPase activating proteins (GAPs) including SGSM2 which increase the GTP hydrolysis activity. Inhibited by GDP dissociation inhibitors (GDIs). Functionally, the small GTPases Rab are key regulators of intracellular membrane trafficking, from the formation of transport vesicles to their fusion with membranes. Rabs cycle between an inactive GDP-bound form and an active GTP-bound form that is able to recruit to membranes different sets of downstream effectors directly responsible for vesicle formation, movement, tethering and fusion. RAB38 plays a role in the maturation of phagosomes that engulf pathogens, such as S.aureus and Mycobacterium. May be involved in melanosomal transport and docking. Involved in the proper sorting of TYRP1. Involved in peripheral melanosomal distribution of TYRP1 in melanocytes; the function, which probably is implicating vesicle-trafficking, includes cooperation with ANKRD27 and VAMP7. Plays an important role in the control of melanin production and melanosome biogenesis. In concert with RAB32, regulates the proper trafficking of melanogenic enzymes TYR, TYRP1 and DCT/TYRP2 to melanosomes in melanocytes. The chain is Ras-related protein Rab-38 from Mus musculus (Mouse).